The following is an 850-amino-acid chain: Pentatricopeptide repeat-containing protein At5g16860 (850 aa).

PPR repeat units follow at residues 58-88 (TLNL…FPPS), 91-125 (GVYH…SWTP), 126-160 (DNYT…GFIS), 161-191 (NVFV…MSVW), 192-227 (DVVS…GCRP), 228-262 (DNIT…EMIQ), 263-293 (NMFV…MSVK), 294-328 (DVVS…KIKM), 329-363 (DVVT…GIKP), 364-398 (NEVT…PIDL), 406-436 (ENMV…LSPK), 439-473 (DVVT…DCQT), 476-510 (NAFT…QQNA), 512-542 (PLFV…MMAK), 543-577 (NEVT…GFKL), 578-608 (DGVT…MKTV), and 614-644 (GPEH…MPME). Residues 649-724 (VWVAFLSCCR…RPGCSWVEGI (76 aa)) are type E motif. The segment at 725–755 (KGTTTFFVGDKTHPHAKEIYQVLLDHMQRIK) is type E(+) motif. The interval 756 to 850 (DIGYVPETGF…NGSCSCKGYW (95 aa)) is type DYW motif.

It belongs to the PPR family. PCMP-H subfamily.

The protein is Pentatricopeptide repeat-containing protein At5g16860 (PCMP-H92) of Arabidopsis thaliana (Mouse-ear cress).